A 101-amino-acid chain; its full sequence is NADH-quinone oxidoreductase subunit K (101 aa).

3 consecutive transmembrane segments (helical) span residues Leu4 to Ile24, Leu30 to Phe50, and Val61 to Val81.

It belongs to the complex I subunit 4L family. NDH-1 is composed of 14 different subunits. Subunits NuoA, H, J, K, L, M, N constitute the membrane sector of the complex.

The protein resides in the cell inner membrane. The enzyme catalyses a quinone + NADH + 5 H(+)(in) = a quinol + NAD(+) + 4 H(+)(out). Functionally, NDH-1 shuttles electrons from NADH, via FMN and iron-sulfur (Fe-S) centers, to quinones in the respiratory chain. The immediate electron acceptor for the enzyme in this species is believed to be ubiquinone. Couples the redox reaction to proton translocation (for every two electrons transferred, four hydrogen ions are translocated across the cytoplasmic membrane), and thus conserves the redox energy in a proton gradient. In Alkalilimnicola ehrlichii (strain ATCC BAA-1101 / DSM 17681 / MLHE-1), this protein is NADH-quinone oxidoreductase subunit K.